The sequence spans 98 residues: MPSISININLAFAAALLGMLMFRSHMMSSLLCLEGMMLSMFTLSTLIILNLQLTMSFTMPILLLVFAACEAAIGLALLVTVSNNYGLDYIQNLNLLQC.

Transmembrane regions (helical) follow at residues 2-22 (PSIS…MLMF), 29-49 (SLLC…LIIL), and 61-81 (ILLL…LVTV).

Belongs to the complex I subunit 4L family. Core subunit of respiratory chain NADH dehydrogenase (Complex I) which is composed of 45 different subunits.

It localises to the mitochondrion inner membrane. The enzyme catalyses a ubiquinone + NADH + 5 H(+)(in) = a ubiquinol + NAD(+) + 4 H(+)(out). Its function is as follows. Core subunit of the mitochondrial membrane respiratory chain NADH dehydrogenase (Complex I) which catalyzes electron transfer from NADH through the respiratory chain, using ubiquinone as an electron acceptor. Part of the enzyme membrane arm which is embedded in the lipid bilayer and involved in proton translocation. This is NADH-ubiquinone oxidoreductase chain 4L (MT-ND4L) from Microcebus mamiratra (Claire's mouse lemur).